The chain runs to 407 residues: Eukaryotic initiation factor 4A-II (407 aa).

Positions 1–23 (MSGGSADYSRDHGGPEGMEPDGV) are disordered. The short motif at 33 to 61 (DNFDDMNLKESLLRGIYAYGFEKPSAIQQ) is the Q motif element. Positions 64-235 (IIPCIKGYDV…KKFMREPIRI (172 aa)) constitute a Helicase ATP-binding domain. 77 to 84 (AQSGTGKT) is a binding site for ATP. The DEAD box motif lies at 183–186 (DEAD). Residues 246–407 (GIKQFYINVE…EMPMNVADLI (162 aa)) form the Helicase C-terminal domain.

The protein belongs to the DEAD box helicase family. eIF4A subfamily. As to quaternary structure, eIF4F is a multi-subunit complex, the composition of which varies with external and internal environmental conditions. It is composed of at least EIF4A, EIF4E and EIF4G1/EIFFG3. Interacts with EIF4E.

The enzyme catalyses ATP + H2O = ADP + phosphate + H(+). Its function is as follows. ATP-dependent RNA helicase which is a subunit of the eIF4F complex involved in cap recognition and is required for mRNA binding to ribosome. In the current model of translation initiation, eIF4A unwinds RNA secondary structures in the 5'-UTR of mRNAs which is necessary to allow efficient binding of the small ribosomal subunit, and subsequent scanning for the initiator codon. The sequence is that of Eukaryotic initiation factor 4A-II (EIF4A2) from Gallus gallus (Chicken).